Reading from the N-terminus, the 614-residue chain is Beta-glucosidase 33 (614 aa).

An N-terminal signal peptide occupies residues 1 to 26 (MATATLTLFLGLLALTSTILSFNADA). A beta-D-glucoside-binding positions include Q113, H217, and 262–263 (NE). The active-site Proton donor is E263. A disulfide bridge links C282 with C290. N-linked (GlcNAc...) asparagine glycosylation is present at N344. Y407 provides a ligand contact to a beta-D-glucoside. N-linked (GlcNAc...) asparagine glycosylation is found at N419, N432, and N439. An a beta-D-glucoside-binding site is contributed by E479. E479 functions as the Nucleophile in the catalytic mechanism. N-linked (GlcNAc...) asparagine glycosylation occurs at N491. Residues W529, 536–537 (EW), and F545 each bind a beta-D-glucoside.

It belongs to the glycosyl hydrolase 1 family.

The catalysed reaction is Hydrolysis of terminal, non-reducing beta-D-glucosyl residues with release of beta-D-glucose.. This chain is Beta-glucosidase 33, found in Arabidopsis thaliana (Mouse-ear cress).